The following is a 637-amino-acid chain: 1-deoxy-D-xylulose-5-phosphate synthase (637 aa).

Residues histidine 71 and 112 to 114 each bind thiamine diphosphate; that span reads SHA. Aspartate 144 contributes to the Mg(2+) binding site. Thiamine diphosphate contacts are provided by residues 145–146, asparagine 173, tyrosine 284, and glutamate 365; that span reads GA. Mg(2+) is bound at residue asparagine 173.

Belongs to the transketolase family. DXPS subfamily. As to quaternary structure, homodimer. The cofactor is Mg(2+). Requires thiamine diphosphate as cofactor.

The catalysed reaction is D-glyceraldehyde 3-phosphate + pyruvate + H(+) = 1-deoxy-D-xylulose 5-phosphate + CO2. It participates in metabolic intermediate biosynthesis; 1-deoxy-D-xylulose 5-phosphate biosynthesis; 1-deoxy-D-xylulose 5-phosphate from D-glyceraldehyde 3-phosphate and pyruvate: step 1/1. Its function is as follows. Catalyzes the acyloin condensation reaction between C atoms 2 and 3 of pyruvate and glyceraldehyde 3-phosphate to yield 1-deoxy-D-xylulose-5-phosphate (DXP). The polypeptide is 1-deoxy-D-xylulose-5-phosphate synthase (Mycobacterium ulcerans (strain Agy99)).